Here is a 222-residue protein sequence, read N- to C-terminus: DNA-directed RNA polymerase V subunit 5A (222 aa).

Belongs to the archaeal Rpo5/eukaryotic RPB5 RNA polymerase subunit family. In terms of assembly, component of the RNA polymerase V complex. Expressed in roots, leaves, siliques and seeds, and to a lower level, in flower buds and flowers.

The protein resides in the nucleus. In terms of biological role, DNA-dependent RNA polymerase catalyzes the transcription of DNA into RNA using the four ribonucleoside triphosphates as substrates. Component of RNA polymerase V involved in RNA-directed DNA methylation-dependent (RdDM) silencing of endogenous repeated sequences, including transposable elements. Required for establishment of DNA methylation. This Arabidopsis thaliana (Mouse-ear cress) protein is DNA-directed RNA polymerase V subunit 5A (NRPE5A).